A 636-amino-acid chain; its full sequence is Chaperone protein DnaK (636 aa).

Phosphothreonine; by autocatalysis is present on threonine 198. Residues 598 to 636 (YAAKEQPGEHGETGSGEQARKESGKDENVVDADFEEVKK) form a disordered region. The span at 603–625 (QPGEHGETGSGEQARKESGKDEN) shows a compositional bias: basic and acidic residues. Residues 626–636 (VVDADFEEVKK) show a composition bias toward acidic residues.

This sequence belongs to the heat shock protein 70 family.

In terms of biological role, acts as a chaperone. This chain is Chaperone protein DnaK, found in Pelobacter propionicus (strain DSM 2379 / NBRC 103807 / OttBd1).